A 288-amino-acid chain; its full sequence is MAIHSFRPLTPAGRFTSLNKREGLSKKRPQKALTEPKPKTGGRNVYGRITTRHIGGGHKQLYRIIDFKRDILDMPATVEALEYDPNRTSNLALVVYANGEKKYILAPEGLQVGAKIFASNKATTNDYNVGNNFPLHLIPPSTRVHAVELVPGRGAKIARAAGTGLELVAVEGDRATLKMPSGELRLVNAKCRATIGEVGNGDHNNQSLGKAGRRRWLGVRPTVRGMVMNPVDHPNGGGQGKSKGGGGRQQLVSPWGQLAKGFPTRRRSKQSNAQIIVHHNGRKPRGKK.

Disordered regions lie at residues 1–46 (MAIH…RNVY) and 226–288 (MVMN…RGKK). Residues 235-248 (NGGGQGKSKGGGGR) show a composition bias toward gly residues. Positions 279–288 (HNGRKPRGKK) are enriched in basic residues.

Belongs to the universal ribosomal protein uL2 family. Part of the 50S ribosomal subunit. Forms a bridge to the 30S subunit in the 70S ribosome.

Functionally, one of the primary rRNA binding proteins. Required for association of the 30S and 50S subunits to form the 70S ribosome, for tRNA binding and peptide bond formation. It has been suggested to have peptidyltransferase activity; this is somewhat controversial. Makes several contacts with the 16S rRNA in the 70S ribosome. This chain is Large ribosomal subunit protein uL2, found in Opitutus terrae (strain DSM 11246 / JCM 15787 / PB90-1).